Reading from the N-terminus, the 100-residue chain is ATP synthase subunit c (100 aa).

Transmembrane regions (helical) follow at residues 27 to 47 (SVIAAGIGLGLAALGGAIGMG) and 72 to 92 (FIALAMIEAQVIYALVITLIV).

It belongs to the ATPase C chain family. As to quaternary structure, F-type ATPases have 2 components, F(1) - the catalytic core - and F(0) - the membrane proton channel. F(1) has five subunits: alpha(3), beta(3), gamma(1), delta(1), epsilon(1). F(0) has three main subunits: a(1), b(2) and c(10-14). The alpha and beta chains form an alternating ring which encloses part of the gamma chain. F(1) is attached to F(0) by a central stalk formed by the gamma and epsilon chains, while a peripheral stalk is formed by the delta and b chains.

The protein localises to the cell inner membrane. F(1)F(0) ATP synthase produces ATP from ADP in the presence of a proton or sodium gradient. F-type ATPases consist of two structural domains, F(1) containing the extramembraneous catalytic core and F(0) containing the membrane proton channel, linked together by a central stalk and a peripheral stalk. During catalysis, ATP synthesis in the catalytic domain of F(1) is coupled via a rotary mechanism of the central stalk subunits to proton translocation. The polypeptide is ATP synthase subunit c (Campylobacter curvus (strain 525.92)).